The following is a 376-amino-acid chain: Protein RecA (376 aa).

78–85 (GPESSGKT) contacts ATP. Residues 355–376 (PVELVPNVDFDDEADTEADAED) are disordered. Over residues 363 to 376 (DFDDEADTEADAED) the composition is skewed to acidic residues.

Belongs to the RecA family.

The protein localises to the cytoplasm. Its function is as follows. Can catalyze the hydrolysis of ATP in the presence of single-stranded DNA, the ATP-dependent uptake of single-stranded DNA by duplex DNA, and the ATP-dependent hybridization of homologous single-stranded DNAs. It interacts with LexA causing its activation and leading to its autocatalytic cleavage. This is Protein RecA from Corynebacterium glutamicum (strain R).